Reading from the N-terminus, the 117-residue chain is Large ribosomal subunit protein bL20 (117 aa).

It belongs to the bacterial ribosomal protein bL20 family.

Its function is as follows. Binds directly to 23S ribosomal RNA and is necessary for the in vitro assembly process of the 50S ribosomal subunit. It is not involved in the protein synthesizing functions of that subunit. This is Large ribosomal subunit protein bL20 from Mycoplasma mobile (strain ATCC 43663 / 163K / NCTC 11711) (Mesomycoplasma mobile).